Consider the following 196-residue polypeptide: ATP-dependent Clp protease proteolytic subunit (196 aa).

Ser-101 (nucleophile) is an active-site residue. The active site involves His-126.

It belongs to the peptidase S14 family. In terms of assembly, component of the chloroplastic Clp protease core complex.

The protein resides in the plastid. The protein localises to the chloroplast stroma. It catalyses the reaction Hydrolysis of proteins to small peptides in the presence of ATP and magnesium. alpha-casein is the usual test substrate. In the absence of ATP, only oligopeptides shorter than five residues are hydrolyzed (such as succinyl-Leu-Tyr-|-NHMec, and Leu-Tyr-Leu-|-Tyr-Trp, in which cleavage of the -Tyr-|-Leu- and -Tyr-|-Trp bonds also occurs).. Its function is as follows. Cleaves peptides in various proteins in a process that requires ATP hydrolysis. Has a chymotrypsin-like activity. Plays a major role in the degradation of misfolded proteins. The polypeptide is ATP-dependent Clp protease proteolytic subunit (Lotus japonicus (Lotus corniculatus var. japonicus)).